Reading from the N-terminus, the 232-residue chain is Phosphoglycolate phosphatase (232 aa).

Asp8 functions as the Nucleophile in the catalytic mechanism. Asp8 and Asp10 together coordinate Mg(2+). Substrate is bound at residue Lys155. Mg(2+) contacts are provided by Asp178 and Asp182.

It belongs to the archaeal SPP-like hydrolase family. Mg(2+) serves as cofactor.

The catalysed reaction is 2-phosphoglycolate + H2O = glycolate + phosphate. Catalyzes the dephosphorylation of 2-phosphoglycolate. The chain is Phosphoglycolate phosphatase from Methanospirillum hungatei JF-1 (strain ATCC 27890 / DSM 864 / NBRC 100397 / JF-1).